The sequence spans 422 residues: Enolase (422 aa).

Gln-162 contacts (2R)-2-phosphoglycerate. Glu-204 serves as the catalytic Proton donor. Asp-241, Glu-284, and Asp-311 together coordinate Mg(2+). Positions 336, 365, 366, and 387 each coordinate (2R)-2-phosphoglycerate. The active-site Proton acceptor is Lys-336.

This sequence belongs to the enolase family. Requires Mg(2+) as cofactor.

The protein localises to the cytoplasm. The protein resides in the secreted. It is found in the cell surface. The enzyme catalyses (2R)-2-phosphoglycerate = phosphoenolpyruvate + H2O. The protein operates within carbohydrate degradation; glycolysis; pyruvate from D-glyceraldehyde 3-phosphate: step 4/5. In terms of biological role, catalyzes the reversible conversion of 2-phosphoglycerate (2-PG) into phosphoenolpyruvate (PEP). It is essential for the degradation of carbohydrates via glycolysis. The protein is Enolase of Thermus thermophilus (strain ATCC 27634 / DSM 579 / HB8).